A 340-amino-acid polypeptide reads, in one-letter code: Thioesterase pkgB (340 aa).

5 residues coordinate Zn(2+): His97, His99, Asp101, His102, and His205. The Proton donor/acceptor role is filled by Asp101. Low complexity predominate over residues 242-258 (SSRNGGSTSSIGSVSES). The interval 242–271 (SSRNGGSTSSIGSVSESGDSDEEDNNMKTS) is disordered.

The protein belongs to the metallo-beta-lactamase superfamily. Zn(2+) serves as cofactor.

The catalysed reaction is 3,5,7,9,11,13-hexaoxotetradecanoyl-[ACP] = dehydrocitreoisocoumarin + holo-[ACP] + H2O. It carries out the reaction 3,5,7,9,11-pentaoxododecanoyl-[ACP] = 6,8-dihydroxy-3-(2-oxopropyl)-isocoumarin + holo-[ACP] + H2O. Thioesterase; part of the pkg gene cluster that mediates the biosynthesis of dihydrocitreoisocoumarin and 6,8-dihydroxy-3-(2-oxopropyl)-isocoumarin. The non-reducing polyketide synthase pkgA performs the condensation of one acetyl-CoA starter unit with 6 and 5 malonyl-CoA units, respectively. As pkgA lacks a releasing domain, the thioesterase pkgB is necessary to break the thioester bond and release dihydrocitreoisocoumarin and 6,8-dihydroxy-3-(2-oxopropyl)-isocoumarin from pkgA. The sequence is that of Thioesterase pkgB from Emericella nidulans (strain FGSC A4 / ATCC 38163 / CBS 112.46 / NRRL 194 / M139) (Aspergillus nidulans).